A 327-amino-acid polypeptide reads, in one-letter code: Selenate reductase subunit beta (327 aa).

3 4Fe-4S ferredoxin-type domains span residues 6–35, 124–155, and 157–186; these read LAYV…RDGR, NHYF…KREE, and GLVV…FNLQ. [4Fe-4S] cluster contacts are provided by cysteine 15, cysteine 18, cysteine 21, cysteine 25, cysteine 133, cysteine 136, and cysteine 141. Cysteine 145, cysteine 166, and cysteine 172 together coordinate [3Fe-4S] cluster. Residues cysteine 176, cysteine 193, cysteine 196, cysteine 208, and cysteine 212 each coordinate [4Fe-4S] cluster.

Heterotrimer of alpha (SerA), beta (SerB) and gamma (SerC) subunits. It depends on [3Fe-4S] cluster as a cofactor. [4Fe-4S] cluster serves as cofactor.

The protein resides in the periplasm. The enzyme catalyses selenite + 2 Fe(III)-[cytochrome c] + H2O = 2 Fe(II)-[cytochrome] + selenate + 2 H(+). Enzyme isolated from cells grown in a tungstate rich environment shows a 20-fold reduction in selenate reductase activity. In terms of biological role, component of the selenate reductase, which catalyzes the reduction of selenate to selenite and allows anaerobic growth with selenate as the sole terminal electron acceptor. A c-type di-heme cytochrome of the cytc4 family was shown to donate electrons to the selenate reductase in vitro. SerABC can also use reduced benzyl viologen or reduced methyl viologen as an electron donor. This subunit transfers electrons from SerC to SerA. The reductase is specific for selenate, and cannot reduce nitrate, nitrite, chlorate or sulfate. This is Selenate reductase subunit beta from Thauera selenatis.